A 208-amino-acid chain; its full sequence is Methylthioribulose-1-phosphate dehydratase (208 aa).

Histidine 101 and histidine 103 together coordinate Zn(2+).

The protein belongs to the aldolase class II family. MtnB subfamily. Zn(2+) is required as a cofactor.

It catalyses the reaction 5-(methylsulfanyl)-D-ribulose 1-phosphate = 5-methylsulfanyl-2,3-dioxopentyl phosphate + H2O. The protein operates within amino-acid biosynthesis; L-methionine biosynthesis via salvage pathway; L-methionine from S-methyl-5-thio-alpha-D-ribose 1-phosphate: step 2/6. In terms of biological role, catalyzes the dehydration of methylthioribulose-1-phosphate (MTRu-1-P) into 2,3-diketo-5-methylthiopentyl-1-phosphate (DK-MTP-1-P). This chain is Methylthioribulose-1-phosphate dehydratase, found in Gluconobacter oxydans (strain 621H) (Gluconobacter suboxydans).